Consider the following 447-residue polypeptide: GTPase Der (447 aa).

EngA-type G domains follow at residues 3–167 (PVIA…VQER) and 181–354 (VKIA…AAAM). Residues 9-16 (GRPNVGKS), 56-60 (DTGGF), 119-122 (NKAE), 187-194 (GRPNVGKS), 234-238 (DTAGL), and 299-302 (NKWD) contribute to the GTP site. The KH-like domain occupies 355–439 (VKLPTPQLTR…PLRIEFRTNK (85 aa)).

Belongs to the TRAFAC class TrmE-Era-EngA-EngB-Septin-like GTPase superfamily. EngA (Der) GTPase family. In terms of assembly, associates with the 50S ribosomal subunit.

In terms of biological role, GTPase that plays an essential role in the late steps of ribosome biogenesis. This is GTPase Der from Cupriavidus pinatubonensis (strain JMP 134 / LMG 1197) (Cupriavidus necator (strain JMP 134)).